Reading from the N-terminus, the 121-residue chain is Small ribosomal subunit protein bS6 (121 aa).

It belongs to the bacterial ribosomal protein bS6 family.

In terms of biological role, binds together with bS18 to 16S ribosomal RNA. In Rickettsia peacockii (strain Rustic), this protein is Small ribosomal subunit protein bS6.